A 282-amino-acid polypeptide reads, in one-letter code: Shikimate dehydrogenase (NADP(+)) (282 aa).

Shikimate contacts are provided by residues 16-18 (SLS) and Thr-63. The active-site Proton acceptor is Lys-67. Shikimate-binding residues include Asn-88 and Asp-103. NADP(+) contacts are provided by residues 128 to 132 (GAGGA) and Gly-243.

The protein belongs to the shikimate dehydrogenase family. Homodimer.

The catalysed reaction is shikimate + NADP(+) = 3-dehydroshikimate + NADPH + H(+). Its pathway is metabolic intermediate biosynthesis; chorismate biosynthesis; chorismate from D-erythrose 4-phosphate and phosphoenolpyruvate: step 4/7. Involved in the biosynthesis of the chorismate, which leads to the biosynthesis of aromatic amino acids. Catalyzes the reversible NADPH linked reduction of 3-dehydroshikimate (DHSA) to yield shikimate (SA). The chain is Shikimate dehydrogenase (NADP(+)) from Xylella fastidiosa (strain Temecula1 / ATCC 700964).